Reading from the N-terminus, the 625-residue chain is Histone-lysine N-methyltransferase set9 (625 aa).

The 115-residue stretch at serine 120–glycine 234 folds into the SET domain. 5 disordered regions span residues proline 260–isoleucine 348, glycine 368–glycine 405, isoleucine 432–serine 451, threonine 457–valine 476, and valine 582–methionine 625. 2 stretches are compositionally biased toward polar residues: residues serine 269–leucine 286 and glutamate 372–serine 386. Residues lysine 462 to histidine 473 show a composition bias toward basic residues. Positions serine 593–asparagine 610 are enriched in basic and acidic residues. Positions threonine 611–methionine 625 are enriched in basic residues.

This sequence belongs to the class V-like SAM-binding methyltransferase superfamily. Histone-lysine methyltransferase family. Suvar4-20 subfamily.

The protein localises to the nucleus. It localises to the chromosome. The catalysed reaction is L-lysyl(20)-[histone H4] + 3 S-adenosyl-L-methionine = N(6),N(6),N(6)-trimethyl-L-lysyl(20)-[histone H4] + 3 S-adenosyl-L-homocysteine + 3 H(+). Functionally, histone methyltransferase that trimethylates 'Lys-20' of histone H4 to form H4K20me3. This is Histone-lysine N-methyltransferase set9 (set9) from Aspergillus oryzae (strain ATCC 42149 / RIB 40) (Yellow koji mold).